Reading from the N-terminus, the 305-residue chain is Tetraspanin-12 (305 aa).

Residues 1 to 12 lie on the Cytoplasmic side of the membrane; it reads MAREDSVRCLRC. 2 S-palmitoyl cysteine lipidation sites follow: C9 and C12. The chain crosses the membrane as a helical span at residues 13–33; that stretch reads LLYALNLLFWLMSISVLGVSA. The Extracellular portion of the chain corresponds to 34-59; the sequence is WIRDYLNNVLTLTAETRVEEAVILTY. The helical transmembrane segment at 60–80 threads the bilayer; that stretch reads FPVVHPVMIAVCCFLILVGML. Residues 81–89 are Cytoplasmic-facing; that stretch reads GYCGTVKRN. A lipid anchor (S-palmitoyl cysteine) is attached at C83. The helical transmembrane segment at 90–110 threads the bilayer; sequence LLLLVWYFGSLLVIFCVELAC. At 111-224 the chain is on the extracellular side; the sequence is GVWTYEQEIT…RGTKQLQVLR (114 aa). A helical transmembrane segment spans residues 225–245; that stretch reads FLGISIGVTQILAMILTITLL. The Cytoplasmic segment spans residues 246–305; sequence WALYYDRRDPGADQIMSLKNDTSQQLSCHSVELLKPSLTGIFEHTSMANSFNTHFEMEEL.

The protein belongs to the tetraspanin (TM4SF) family. In terms of assembly, component of a complex, at least composed of TSPAN12, FZD4 and norrin (NDP). In terms of processing, palmitoylated; required for interaction with ADAM10. The precise position of palmitoylated residues is unclear and occurs either on Cys-9, Cys-12 and/or Cys-83.

It localises to the cell membrane. Its function is as follows. Regulator of cell surface receptor signal transduction. Plays a central role in retinal vascularization by regulating norrin (NDP) signal transduction. Acts in concert with norrin (NDP) to promote FZD4 multimerization and subsequent activation of FZD4, leading to promote accumulation of beta-catenin (CTNNB1) and stimulate LEF/TCF-mediated transcriptional programs. Suprisingly, it only activates the norrin (NDP)-dependent activation of FZD4, while it does not activate the Wnt-dependent activation of FZD4, suggesting the existence of a Wnt-independent signaling that also promote accumulation the beta-catenin (CTNNB1). This is Tetraspanin-12 (TSPAN12) from Gallus gallus (Chicken).